The primary structure comprises 433 residues: Protein arginine N-methyltransferase 2 (433 aa).

Residues 1-20 form a disordered region; it reads MATSGDCPRSESQGEEPAEC. Interaction with ESR1 regions lie at residues 1-277 and 133-275; these read MATS…SALK and KESL…NLSA. In terms of domain architecture, SH3 spans 30-89; sequence VQPEEFVAIADYAATDETQLSFLRGEKILILRQTTADWWWGERAGCCGYIPANHVGKHVD. Asymmetric dimethylarginine occurs at positions 61 and 72. The interaction with RB1 stretch occupies residues 83–207; sequence HVGKHVDEYD…DVVLPEKVDV (125 aa). Positions 99–432 constitute an SAM-dependent MTase PRMT-type domain; sequence DEEYFGSYGT…KVGEKVFPIW (334 aa). Residues H112, R121, G145, E168, and E197 each contribute to the S-adenosyl-L-methionine site. Residues E211 and E220 contribute to the active site.

It belongs to the class I-like SAM-binding methyltransferase superfamily. Protein arginine N-methyltransferase family. As to quaternary structure, self-associates. Interacts with RB1 and E2F1. Interacts with NCOA6 coactivator. Interacts (via SH3 domain) with PRMT8. Interacts with AR. Interacts with NFKBIA. Interacts with ESR1, ESR2, PGR, PPARG, RARA, RXRA and THRB. Interacts with HNRNPUL1. As to expression, widely expressed. Highly expressed in androgen target organs such as heart, prostate, skeletal muscle, ovary and spinal cord.

The protein resides in the cytoplasm. The protein localises to the nucleus. It is found in the nucleolus. The catalysed reaction is L-arginyl-[protein] + 2 S-adenosyl-L-methionine = N(omega),N(omega)-dimethyl-L-arginyl-[protein] + 2 S-adenosyl-L-homocysteine + 2 H(+). Arginine methyltransferase that methylates the guanidino nitrogens of arginyl residues in proteins such as STAT3, FBL, histone H4. Acts as a coactivator (with NCOA2) of the androgen receptor (AR)-mediated transactivation. Acts as a coactivator (with estrogen) of estrogen receptor (ER)-mediated transactivation. Enhances PGR, PPARG, RARA-mediated transactivation. May inhibit NF-kappa-B transcription and promote apoptosis. Represses E2F1 transcriptional activity (in a RB1-dependent manner). May be involved in growth regulation. This chain is Protein arginine N-methyltransferase 2 (PRMT2), found in Homo sapiens (Human).